Reading from the N-terminus, the 338-residue chain is DNA-directed RNA polymerase subunit alpha (338 aa).

An alpha N-terminal domain (alpha-NTD) region spans residues 1–234 (MIHKNWQELI…DQLSIFVNFD (234 aa)). Positions 250–338 (FNPLLLKKVD…ELAKKYEDNF (89 aa)) are alpha C-terminal domain (alpha-CTD).

This sequence belongs to the RNA polymerase alpha chain family. As to quaternary structure, homodimer. The RNAP catalytic core consists of 2 alpha, 1 beta, 1 beta' and 1 omega subunit. When a sigma factor is associated with the core the holoenzyme is formed, which can initiate transcription.

It catalyses the reaction RNA(n) + a ribonucleoside 5'-triphosphate = RNA(n+1) + diphosphate. DNA-dependent RNA polymerase catalyzes the transcription of DNA into RNA using the four ribonucleoside triphosphates as substrates. The sequence is that of DNA-directed RNA polymerase subunit alpha from Jannaschia sp. (strain CCS1).